A 390-amino-acid chain; its full sequence is Acid protease (390 aa).

Positions 1–18 are cleaved as a signal peptide; that stretch reads MLFSKSLLLSVLASLSFA. The Peptidase A1 domain maps to 75–386; the sequence is YLTTIEIGTP…DIDNSQVGIA (312 aa). Catalysis depends on residues aspartate 93 and aspartate 282.

This sequence belongs to the peptidase A1 family.

The protein is Acid protease (PEP1) of Saccharomycopsis fibuligera (Yeast).